A 450-amino-acid polypeptide reads, in one-letter code: Phosphoglucosamine mutase (450 aa).

Ser-101 serves as the catalytic Phosphoserine intermediate. Ser-101, Asp-240, Asp-242, and Asp-244 together coordinate Mg(2+). Position 101 is a phosphoserine (Ser-101).

This sequence belongs to the phosphohexose mutase family. Mg(2+) is required as a cofactor. Activated by phosphorylation.

It carries out the reaction alpha-D-glucosamine 1-phosphate = D-glucosamine 6-phosphate. Catalyzes the conversion of glucosamine-6-phosphate to glucosamine-1-phosphate. The chain is Phosphoglucosamine mutase from Streptococcus pneumoniae serotype 4 (strain ATCC BAA-334 / TIGR4).